A 122-amino-acid chain; its full sequence is Probable DNA-directed RNA polymerase II subunit RPB11 (122 aa).

Belongs to the archaeal Rpo11/eukaryotic RPB11/RPC19 RNA polymerase subunit family. As to quaternary structure, component of the RNA polymerase II (Pol II) complex consisting of 12 subunits.

The protein resides in the nucleus. Its function is as follows. DNA-dependent RNA polymerase catalyzes the transcription of DNA into RNA using the four ribonucleoside triphosphates as substrates. Component of RNA polymerase II which synthesizes mRNA precursors and many functional non-coding RNAs. Pol II is the central component of the basal RNA polymerase II transcription machinery. It is composed of mobile elements that move relative to each other. RPB11 is part of the core element with the central large cleft. The sequence is that of Probable DNA-directed RNA polymerase II subunit RPB11 (rpb-11) from Caenorhabditis elegans.